Consider the following 820-residue polypeptide: Quinate repressor protein (820 aa).

Residues 25 to 79 (SFEQMLLQQDSNESSRRTSPSRTHSRVDLERHSSHIVSLSSSNGSPSLEDPENRL) form a disordered region. The segment covering 59–71 (HIVSLSSSNGSPS) has biased composition (low complexity).

In the N-terminal section; belongs to the shikimate kinase family. This sequence in the 2nd section; belongs to the type-I 3-dehydroquinase family. The protein in the C-terminal section; belongs to the shikimate dehydrogenase family. In terms of assembly, interacts with qutA; transcriptional activator of the quinate utilization pathway genes.

Multi-domain repressor protein that negatively regulates transcription of the quinate utilization pathway genes. May mediate its repressor activity by binding directly to the qutA activator protein. This Talaromyces stipitatus (strain ATCC 10500 / CBS 375.48 / QM 6759 / NRRL 1006) (Penicillium stipitatum) protein is Quinate repressor protein (qutR).